Consider the following 358-residue polypeptide: UDP-N-acetylglucosamine--N-acetylmuramyl-(pentapeptide) pyrophosphoryl-undecaprenol N-acetylglucosamine transferase (358 aa).

UDP-N-acetyl-alpha-D-glucosamine contacts are provided by residues 11 to 13 (TGG), Asn122, Arg161, Ser189, Ile243, 262 to 267 (ALTVCE), and Gln288.

Belongs to the glycosyltransferase 28 family. MurG subfamily.

It is found in the cell inner membrane. The catalysed reaction is di-trans,octa-cis-undecaprenyl diphospho-N-acetyl-alpha-D-muramoyl-L-alanyl-D-glutamyl-meso-2,6-diaminopimeloyl-D-alanyl-D-alanine + UDP-N-acetyl-alpha-D-glucosamine = di-trans,octa-cis-undecaprenyl diphospho-[N-acetyl-alpha-D-glucosaminyl-(1-&gt;4)]-N-acetyl-alpha-D-muramoyl-L-alanyl-D-glutamyl-meso-2,6-diaminopimeloyl-D-alanyl-D-alanine + UDP + H(+). The protein operates within cell wall biogenesis; peptidoglycan biosynthesis. In terms of biological role, cell wall formation. Catalyzes the transfer of a GlcNAc subunit on undecaprenyl-pyrophosphoryl-MurNAc-pentapeptide (lipid intermediate I) to form undecaprenyl-pyrophosphoryl-MurNAc-(pentapeptide)GlcNAc (lipid intermediate II). In Coxiella burnetii (strain Dugway 5J108-111), this protein is UDP-N-acetylglucosamine--N-acetylmuramyl-(pentapeptide) pyrophosphoryl-undecaprenol N-acetylglucosamine transferase.